The following is a 453-amino-acid chain: Allantoinase (453 aa).

Residues His59, His61, Lys146, His186, His242, and Asp315 each contribute to the Zn(2+) site. Lys146 is modified (N6-carboxylysine).

It belongs to the metallo-dependent hydrolases superfamily. Allantoinase family. As to quaternary structure, homotetramer. Zn(2+) is required as a cofactor. Post-translationally, carboxylation allows a single lysine to coordinate two zinc ions.

It carries out the reaction (S)-allantoin + H2O = allantoate + H(+). It participates in nitrogen metabolism; (S)-allantoin degradation; allantoate from (S)-allantoin: step 1/1. In terms of biological role, catalyzes the conversion of allantoin (5-ureidohydantoin) to allantoic acid by hydrolytic cleavage of the five-member hydantoin ring. This is Allantoinase from Escherichia coli O139:H28 (strain E24377A / ETEC).